A 131-amino-acid chain; its full sequence is Small ribosomal subunit protein uS8 (131 aa).

This sequence belongs to the universal ribosomal protein uS8 family. Part of the 30S ribosomal subunit. Contacts proteins S5 and S12.

Functionally, one of the primary rRNA binding proteins, it binds directly to 16S rRNA central domain where it helps coordinate assembly of the platform of the 30S subunit. The sequence is that of Small ribosomal subunit protein uS8 from Burkholderia mallei (strain NCTC 10247).